A 193-amino-acid chain; its full sequence is MPVADTSQPMSGQPVSAVAERYASSLFELAREAGSVDAVAGDLNRFQAMIDESVDLQRLVTSPAFTSEQQASAIAALCDKAEIGGLVGNFLKLVAANRRLFAVPGMIAAFRMIAARHRGELAADVTSAHALTPAQETELKEALKSATGKTVTMFVTVDPSLLGGLIVKIGSRQIDTSLRTKLSTLKLALKEVG.

It belongs to the ATPase delta chain family. In terms of assembly, F-type ATPases have 2 components, F(1) - the catalytic core - and F(0) - the membrane proton channel. F(1) has five subunits: alpha(3), beta(3), gamma(1), delta(1), epsilon(1). F(0) has three main subunits: a(1), b(2) and c(10-14). The alpha and beta chains form an alternating ring which encloses part of the gamma chain. F(1) is attached to F(0) by a central stalk formed by the gamma and epsilon chains, while a peripheral stalk is formed by the delta and b chains.

It localises to the cell inner membrane. Its function is as follows. F(1)F(0) ATP synthase produces ATP from ADP in the presence of a proton or sodium gradient. F-type ATPases consist of two structural domains, F(1) containing the extramembraneous catalytic core and F(0) containing the membrane proton channel, linked together by a central stalk and a peripheral stalk. During catalysis, ATP synthesis in the catalytic domain of F(1) is coupled via a rotary mechanism of the central stalk subunits to proton translocation. This protein is part of the stalk that links CF(0) to CF(1). It either transmits conformational changes from CF(0) to CF(1) or is implicated in proton conduction. This is ATP synthase subunit delta from Allorhizobium ampelinum (strain ATCC BAA-846 / DSM 112012 / S4) (Agrobacterium vitis (strain S4)).